We begin with the raw amino-acid sequence, 454 residues long: Bifunctional protein GlmU (454 aa).

Positions 1-232 (MTDRTCLSIV…VDNVIGINNR (232 aa)) are pyrophosphorylase. Residues 11–14 (LAAG), Lys25, Gln78, and 83–84 (GT) contribute to the UDP-N-acetyl-alpha-D-glucosamine site. Mg(2+) is bound at residue Asp108. Gly144, Glu158, Asn173, and Asn230 together coordinate UDP-N-acetyl-alpha-D-glucosamine. Asn230 lines the Mg(2+) pocket. The tract at residues 233–253 (AELAEAETIWQNRKRRELMLS) is linker. An N-acetyltransferase region spans residues 254-454 (GVTLIAPETV…AIKAAKSVSK (201 aa)). 2 residues coordinate UDP-N-acetyl-alpha-D-glucosamine: Arg319 and Lys337. The Proton acceptor role is filled by His349. UDP-N-acetyl-alpha-D-glucosamine is bound by residues Tyr352 and Asn363. Acetyl-CoA-binding positions include Ala366, 372–373 (NY), Ser391, Ser409, and Arg426.

In the N-terminal section; belongs to the N-acetylglucosamine-1-phosphate uridyltransferase family. It in the C-terminal section; belongs to the transferase hexapeptide repeat family. In terms of assembly, homotrimer. Mg(2+) is required as a cofactor.

It is found in the cytoplasm. The enzyme catalyses alpha-D-glucosamine 1-phosphate + acetyl-CoA = N-acetyl-alpha-D-glucosamine 1-phosphate + CoA + H(+). It carries out the reaction N-acetyl-alpha-D-glucosamine 1-phosphate + UTP + H(+) = UDP-N-acetyl-alpha-D-glucosamine + diphosphate. It functions in the pathway nucleotide-sugar biosynthesis; UDP-N-acetyl-alpha-D-glucosamine biosynthesis; N-acetyl-alpha-D-glucosamine 1-phosphate from alpha-D-glucosamine 6-phosphate (route II): step 2/2. Its pathway is nucleotide-sugar biosynthesis; UDP-N-acetyl-alpha-D-glucosamine biosynthesis; UDP-N-acetyl-alpha-D-glucosamine from N-acetyl-alpha-D-glucosamine 1-phosphate: step 1/1. The protein operates within bacterial outer membrane biogenesis; LPS lipid A biosynthesis. Its function is as follows. Catalyzes the last two sequential reactions in the de novo biosynthetic pathway for UDP-N-acetylglucosamine (UDP-GlcNAc). The C-terminal domain catalyzes the transfer of acetyl group from acetyl coenzyme A to glucosamine-1-phosphate (GlcN-1-P) to produce N-acetylglucosamine-1-phosphate (GlcNAc-1-P), which is converted into UDP-GlcNAc by the transfer of uridine 5-monophosphate (from uridine 5-triphosphate), a reaction catalyzed by the N-terminal domain. This Brucella canis (strain ATCC 23365 / NCTC 10854 / RM-666) protein is Bifunctional protein GlmU.